Reading from the N-terminus, the 207-residue chain is Small ribosomal subunit protein uS3 (207 aa).

The KH type-2 domain occupies 17-86; the sequence is IDEYLEKELR…NPQIEVEEIK (70 aa).

This sequence belongs to the universal ribosomal protein uS3 family. In terms of assembly, part of the 30S ribosomal subunit.

Binds the lower part of the 30S subunit head. The polypeptide is Small ribosomal subunit protein uS3 (Thermococcus sibiricus (strain DSM 12597 / MM 739)).